A 984-amino-acid chain; its full sequence is Translation initiation factor IF-2 (984 aa).

Disordered stretches follow at residues Lys92–Arg267 and Met280–Val392. Over residues Pro104–Pro123 the composition is skewed to low complexity. The span at Arg124 to Gln177 shows a compositional bias: basic and acidic residues. Residues Asp193–Gln235 show a composition bias toward low complexity. 2 stretches are compositionally biased toward basic and acidic residues: residues Ala236–Arg267 and Lys291–Ala302. Residues Pro310 to Gly335 are compositionally biased toward low complexity. Positions Pro351–Gly361 are enriched in basic and acidic residues. Over residues Ala363–Gly375 the composition is skewed to gly residues. The span at Gly381–Val392 shows a compositional bias: basic and acidic residues. Positions Pro484–Lys653 constitute a tr-type G domain. The segment at Gly493–Thr500 is G1. Gly493 to Thr500 is a binding site for GTP. The segment at Gly518–His522 is G2. The G3 stretch occupies residues Asp539–Gly542. Residues Asp539–His543 and Asn593–Asp596 each bind GTP. The segment at Asn593 to Asp596 is G4. A G5 region spans residues Ser629–Lys631.

The protein belongs to the TRAFAC class translation factor GTPase superfamily. Classic translation factor GTPase family. IF-2 subfamily.

The protein resides in the cytoplasm. In terms of biological role, one of the essential components for the initiation of protein synthesis. Protects formylmethionyl-tRNA from spontaneous hydrolysis and promotes its binding to the 30S ribosomal subunits. Also involved in the hydrolysis of GTP during the formation of the 70S ribosomal complex. The sequence is that of Translation initiation factor IF-2 from Variovorax paradoxus (strain S110).